The sequence spans 362 residues: Resuscitation-promoting factor RpfB (362 aa).

Positions 1 to 22 (MLRGVVGAFLVSLTVAGSYAVA) are cleaved as a signal peptide. The G5 domain maps to 192–272 (VTRMRIEKVT…NGVLRVGAKP (81 aa)).

Belongs to the transglycosylase family. Rpf subfamily.

Functionally, factor that stimulates resuscitation of dormant cells. Has peptidoglycan (PG) hydrolytic activity. Active in the pM concentration range. Has little to no effect on actively-growing cells. PG fragments could either directly activate the resuscitation pathway of dormant bacteria or serve as a substrate for endogenous Rpf, resulting in low molecular weight products with resuscitation activity. The polypeptide is Resuscitation-promoting factor RpfB (rpfB) (Mycolicibacterium smegmatis (strain ATCC 700084 / mc(2)155) (Mycobacterium smegmatis)).